A 1250-amino-acid polypeptide reads, in one-letter code: DNA-directed RNA polymerase subunit beta'' (1250 aa).

Residues Cys-224, Cys-314, Cys-321, and Cys-324 each contribute to the Zn(2+) site.

It belongs to the RNA polymerase beta' chain family. RpoC2 subfamily. In plastids the minimal PEP RNA polymerase catalytic core is composed of four subunits: alpha, beta, beta', and beta''. When a (nuclear-encoded) sigma factor is associated with the core the holoenzyme is formed, which can initiate transcription. It depends on Zn(2+) as a cofactor.

The protein resides in the plastid. It is found in the chloroplast. The enzyme catalyses RNA(n) + a ribonucleoside 5'-triphosphate = RNA(n+1) + diphosphate. Functionally, DNA-dependent RNA polymerase catalyzes the transcription of DNA into RNA using the four ribonucleoside triphosphates as substrates. This chain is DNA-directed RNA polymerase subunit beta'', found in Staurastrum punctulatum (Green alga).